Consider the following 363-residue polypeptide: uncharacterized protein (363 aa).

Positions 109-329 (RAALRELRSR…VEELQAQTRE (221 aa)) form a coiled coil.

This is an uncharacterized protein from Homo sapiens (Human).